An 83-amino-acid polypeptide reads, in one-letter code: Small ribosomal subunit protein uS15c (83 aa).

It belongs to the universal ribosomal protein uS15 family. In terms of assembly, part of the 30S ribosomal subunit.

The protein localises to the plastid. It localises to the chloroplast. The chain is Small ribosomal subunit protein uS15c (rps15) from Fagopyrum esculentum subsp. ancestrale (Wild buckwheat).